An 872-amino-acid polypeptide reads, in one-letter code: Metabotropic glutamate receptor 2 (872 aa).

Residues 1–18 (MESLLRFLALLLLRGAVA) form the signal peptide. The Extracellular portion of the chain corresponds to 19–568 (EGPAKKVLTL…EYIRWGDAWA (550 aa)). The cysteines at positions 50 and 92 are disulfide-linked. L-glutamate contacts are provided by Arg-57, Arg-61, Ser-145, Ala-166, and Thr-168. 2 N-linked (GlcNAc...) asparagine glycosylation sites follow: Asn-203 and Asn-286. Cystine bridges form between Cys-234-Cys-518, Cys-355-Cys-362, Cys-400-Cys-407, Cys-500-Cys-519, Cys-504-Cys-522, Cys-525-Cys-537, and Cys-540-Cys-553. Residue Asp-295 coordinates L-glutamate. Asn-338 carries an N-linked (GlcNAc...) asparagine glycan. Lys-377 lines the L-glutamate pocket. An N-linked (GlcNAc...) asparagine glycan is attached at Asn-402. Asn-547 carries an N-linked (GlcNAc...) asparagine glycan. Residues 569 to 589 (VGPVTIACLGALATLFVLGVF) traverse the membrane as a helical segment. The Cytoplasmic portion of the chain corresponds to 590-604 (VRHNATPVVKASGRE). A helical membrane pass occupies residues 605–625 (LCYILLGGVFLCYCMTFIFIA). Residues 626 to 633 (KPSTAVCT) are Extracellular-facing. Cys-632 and Cys-721 are oxidised to a cystine. A helical membrane pass occupies residues 634 to 651 (LRRLGLGTAFSVCYSALL). At 652 to 679 (TKTNRIARIFGGAREGAQRPRFISPASQ) the chain is on the cytoplasmic side. The important for interaction with HTR2A stretch occupies residues 677-685 (ASQVAICLA). The chain crosses the membrane as a helical span at residues 680 to 700 (VAICLALISGQLLIVAAWLVV). Residues 701–726 (EAPGIGKETAPERREVVTLRCNHRDA) are Extracellular-facing. A helical transmembrane segment spans residues 727 to 747 (SMLGSLAYNVLLIALCTLYAF). At 748–760 (KTRKCPENFNEAK) the chain is on the cytoplasmic side. A helical membrane pass occupies residues 761 to 781 (FIGFTMYTTCIIWLAFLPIFY). The Extracellular segment spans residues 782 to 798 (VTSSDYRVQTTTMCVSV). Residues 799–819 (SLSGSVVLGCLFAPKLHIILF) form a helical membrane-spanning segment. Topologically, residues 820 to 872 (QPQKNVVSHRAPTSRFGSAAPRASANLGQGSGSQLVPTVCNGREVVDSTTSSL) are cytoplasmic.

Belongs to the G-protein coupled receptor 3 family. In terms of assembly, forms heterodimers with GRM3 or GRM4. Interacts with GNAI1. Interacts with TAMALIN. Interacts with HTR2A. As to expression, detected in neurons in brain cortex (at protein level).

It is found in the cell membrane. The protein localises to the synapse. It localises to the cell projection. The protein resides in the dendrite. In terms of biological role, dimeric G protein-coupled receptor which is activated by the excitatory neurotransmitter L-glutamate. Plays critical roles in modulating synaptic transmission and neuronal excitability. Upon activation by glutamate, inhibits presynaptic calcium channels, reducing further glutamate release and dampening excitatory signaling. Mechanistically, ligand binding causes a conformation change that triggers signaling via guanine nucleotide-binding proteins (G proteins) and modulates the activity of down-stream effectors, such as adenylate cyclase. May mediate suppression of neurotransmission or may be involved in synaptogenesis or synaptic stabilization. The polypeptide is Metabotropic glutamate receptor 2 (Grm2) (Mus musculus (Mouse)).